Reading from the N-terminus, the 91-residue chain is Insertion element IS1 1 protein InsA (91 aa).

The protein belongs to the IS1 elements InsA family.

Functionally, absolutely required for transposition of IS1. The sequence is that of Insertion element IS1 1 protein InsA (insA1) from Escherichia coli (strain K12).